A 404-amino-acid chain; its full sequence is CinA-like protein (404 aa).

Belongs to the CinA family.

In Deinococcus radiodurans (strain ATCC 13939 / DSM 20539 / JCM 16871 / CCUG 27074 / LMG 4051 / NBRC 15346 / NCIMB 9279 / VKM B-1422 / R1), this protein is CinA-like protein.